The following is an 870-amino-acid chain: Protein RRP6-like 2 (870 aa).

The 166-residue stretch at 263–428 folds into the 3'-5' exonuclease domain; the sequence is VQEVKDLKEL…YIYDLIKLEL (166 aa). The region spanning 479–559 is the HRDC domain; sequence NAAQLAIVAG…RQSMQHYAAF (81 aa). Disordered regions lie at residues 583-605, 649-668, 688-775, and 821-870; these read SEKKDLHTGDVASPSLKENSSQL, GALLGNAASKKKSRTDEKVK, TEKV…EDEP, and FGEG…SFKN. 2 stretches are compositionally biased toward basic and acidic residues: residues 720-729 and 821-834; these read SKEDGVKELK and FGEGHKGRQGKREA. Residues 840–849 are compositionally biased toward polar residues; the sequence is KGSTQEQSEF.

The protein localises to the nucleus. It is found in the nucleolus. The protein resides in the cytoplasm. Its function is as follows. Acts as an important epigenetic regulator through multiple silencing mechanisms. Involved in association with RRP6L1 in the silencing of the solo LTR locus. Controls levels of non-coding RNAs (ncRNAs) from the solo LTR locus. Seems to function independently of the RNA-mediated gene silencing (RdDM) pathway. Functions redundantly with RRP6L1 in the regulation of FLC locus. Participates in the maintenance of trimethylated 'Lys-27' (H3K27me3) at FLC locus via the regulation of antisense long non-coding RNAs (lncRNAs) and the regulation of diverse antisense RNAs derived from the FLC locus. Seems not involved in the exosomal RNA degradation. May be involved in poly(A)-mediated RNA degradation. The chain is Protein RRP6-like 2 from Arabidopsis thaliana (Mouse-ear cress).